The following is a 217-amino-acid chain: Probable transaldolase (217 aa).

Catalysis depends on K83, which acts as the Schiff-base intermediate with substrate.

Belongs to the transaldolase family. Type 3B subfamily.

The protein resides in the cytoplasm. It carries out the reaction D-sedoheptulose 7-phosphate + D-glyceraldehyde 3-phosphate = D-erythrose 4-phosphate + beta-D-fructose 6-phosphate. It participates in carbohydrate degradation; pentose phosphate pathway; D-glyceraldehyde 3-phosphate and beta-D-fructose 6-phosphate from D-ribose 5-phosphate and D-xylulose 5-phosphate (non-oxidative stage): step 2/3. Functionally, transaldolase is important for the balance of metabolites in the pentose-phosphate pathway. The chain is Probable transaldolase from Anaeromyxobacter dehalogenans (strain 2CP-C).